We begin with the raw amino-acid sequence, 349 residues long: UPF0284 protein MA_3887 (349 aa).

It belongs to the UPF0284 family.

The polypeptide is UPF0284 protein MA_3887 (Methanosarcina acetivorans (strain ATCC 35395 / DSM 2834 / JCM 12185 / C2A)).